The sequence spans 152 residues: Transcription elongation factor Spt5 (152 aa).

The 31-residue stretch at 94–124 (PGDLVEVIAGPFKGQKAKVVKIDESKDEVVV) folds into the KOW domain.

It belongs to the archaeal Spt5 family. Heterodimer composed of Spt4 and Spt5. Interacts with RNA polymerase (RNAP) independently of nucleic acids. Forms a homodimer in solution.

Functionally, stimulates transcription elongation. The sequence is that of Transcription elongation factor Spt5 from Pyrococcus furiosus (strain ATCC 43587 / DSM 3638 / JCM 8422 / Vc1).